The sequence spans 950 residues: Voltage-gated inwardly rectifying potassium channel KCNH6 (950 aa).

At 1 to 261 (MPVRRGHVAP…YSPFKAVWDW (261 aa)) the chain is on the cytoplasmic side. The PAS domain occupies 41–70 (IIYCNDGFCELFGYSRVEVMQRPCTCDFLT). In terms of domain architecture, PAC spans 92–144 (CKVDILYYRKDASSFRCLVDVVPVKNEDGAVIMFILNFEDLAQLLAKSSSRSL). Residues 154-174 (LGSEGSHSRPSGQGPGPGRGK) are disordered. Residues 262–282 (LILLLVIYTAVFTPYSAAFLL) form a helical membrane-spanning segment. Topologically, residues 283–298 (SDQDESQRGTCGYTCS) are extracellular. A helical membrane pass occupies residues 299 to 319 (PLTVVDLIVDIMFVVDIVINF). The Cytoplasmic segment spans residues 320-340 (RTTYVNTNDEVVSHPRRIAVH). The helical transmembrane segment at 341-361 (YFKGWFLIDMVAAIPFDLLIF) threads the bilayer. Over 362 to 370 (RTGSDETTT) the chain is Extracellular. The chain crosses the membrane as a helical; Voltage-sensor span at residues 371-391 (LIGLLKTARLLRLVRVARKLD). The Cytoplasmic portion of the chain corresponds to 392–398 (RYSEYGA). A helical membrane pass occupies residues 399–419 (AVLFLLMCTFALIAHWLACIW). Residues 420–463 (YAIGNVERPYLEPKIGWLDSLGAQLGKQYNGSDPASGPSVQDKY) are Extracellular-facing. An intramembrane region (pore-forming) is located at residues 464–484 (VTALYFTFSSLTSVGFGNVSP). The Selectivity filter motif lies at 476-481 (SVGFGN). The Extracellular segment spans residues 485 to 490 (NTNSEK). Residues 491–511 (VFSICVMLIGSLMYASIFGNV) traverse the membrane as a helical segment. Over 512–950 (SAIIQRLYSG…HGSDPGFTRS (439 aa)) the chain is Cytoplasmic. Residues 594-694 (AFRGASKGCL…IHRADLLEVL (101 aa)) form a cNMP-binding domain region. Disordered regions lie at residues 719–750 (GGLQ…APSL) and 890–950 (VPSS…FTRS). The segment covering 740-750 (NDSQSGAAPSL) has biased composition (polar residues). A compositionally biased stretch (low complexity) spans 898–912 (PGGLLSPLASPLRPL).

This sequence belongs to the potassium channel family. H (Eag) (TC 1.A.1.20) subfamily. Kv11.2/KCNH6 sub-subfamily. As to quaternary structure, the potassium channel is probably composed of a homo- or heterotetrameric complex of pore-forming alpha subunits that can associate only within their subfamily. Highly expressed in celiac and superior mesenteric ganglia, but not detected in brain or in heart. Detected at low levels in retina. Also found in pituitary. Also found in the olfactory bulb (granular and mitral cell layers).

The protein localises to the cell membrane. It catalyses the reaction K(+)(in) = K(+)(out). In terms of biological role, pore-forming (alpha) subunit of voltage-gated inwardly rectifying potassium channel. Characterized by unusual gating kinetics by producing relatively small outward currents during membrane depolarization and large inward currents during subsequent repolarization which reflect a rapid inactivation during depolarization and quick recovery from inactivation but slow deactivation (closing) during repolarization. Activates even more slowly than KCNH2. This Rattus norvegicus (Rat) protein is Voltage-gated inwardly rectifying potassium channel KCNH6.